The primary structure comprises 239 residues: MKVTKKDMIYEGKGKKMWSVAEDENLLIAEFKDDLTAFNGIKKSSEKGKGALNNKISTQLFHLLEKNGIKTDLVETINDTEQVVKKVKIFPLEVIARNIATGSLTKRLGIKDGTVLPFTLVEFCYKDDDLGDPILNDDHALLLGAVKDKNELENLRQTAIKINKILKEFFATKNLKLVDFKIELGKDKDGNILLADEISPDSCRFWDAKTNEKLDKDRFRQSIGNVKVAYEEVLRRILS.

It belongs to the SAICAR synthetase family.

The enzyme catalyses 5-amino-1-(5-phospho-D-ribosyl)imidazole-4-carboxylate + L-aspartate + ATP = (2S)-2-[5-amino-1-(5-phospho-beta-D-ribosyl)imidazole-4-carboxamido]succinate + ADP + phosphate + 2 H(+). The protein operates within purine metabolism; IMP biosynthesis via de novo pathway; 5-amino-1-(5-phospho-D-ribosyl)imidazole-4-carboxamide from 5-amino-1-(5-phospho-D-ribosyl)imidazole-4-carboxylate: step 1/2. The polypeptide is Phosphoribosylaminoimidazole-succinocarboxamide synthase (Campylobacter hominis (strain ATCC BAA-381 / DSM 21671 / CCUG 45161 / LMG 19568 / NCTC 13146 / CH001A)).